Here is a 249-residue protein sequence, read N- to C-terminus: Tryptophan synthase alpha chain (249 aa).

Catalysis depends on proton acceptor residues E43 and D54.

It belongs to the TrpA family. Tetramer of two alpha and two beta chains.

The catalysed reaction is (1S,2R)-1-C-(indol-3-yl)glycerol 3-phosphate + L-serine = D-glyceraldehyde 3-phosphate + L-tryptophan + H2O. It participates in amino-acid biosynthesis; L-tryptophan biosynthesis; L-tryptophan from chorismate: step 5/5. The alpha subunit is responsible for the aldol cleavage of indoleglycerol phosphate to indole and glyceraldehyde 3-phosphate. The chain is Tryptophan synthase alpha chain from Campylobacter jejuni subsp. doylei (strain ATCC BAA-1458 / RM4099 / 269.97).